The following is a 73-amino-acid chain: MSLELLSKLETKIQATLETIELLKMELEEEKQKTSALNEQNQQLSEQNQQLQQELASWNDKVTGLVGLLNSEI.

Residues 3 to 67 adopt a coiled-coil conformation; that stretch reads LELLSKLETK…WNDKVTGLVG (65 aa).

This sequence belongs to the ZapB family. Homodimer. The ends of the coiled-coil dimer bind to each other, forming polymers. Interacts with FtsZ.

It is found in the cytoplasm. Its function is as follows. Non-essential, abundant cell division factor that is required for proper Z-ring formation. It is recruited early to the divisome by direct interaction with FtsZ, stimulating Z-ring assembly and thereby promoting cell division earlier in the cell cycle. Its recruitment to the Z-ring requires functional FtsA or ZipA. This is Cell division protein ZapB from Shewanella sp. (strain ANA-3).